Reading from the N-terminus, the 406-residue chain is Arginine biosynthesis bifunctional protein ArgJ (406 aa).

Substrate is bound by residues Thr156, Lys182, Thr193, Glu279, Asn401, and Thr406. The active-site Nucleophile is Thr193.

Belongs to the ArgJ family. In terms of assembly, heterotetramer of two alpha and two beta chains.

The protein localises to the cytoplasm. The catalysed reaction is N(2)-acetyl-L-ornithine + L-glutamate = N-acetyl-L-glutamate + L-ornithine. It catalyses the reaction L-glutamate + acetyl-CoA = N-acetyl-L-glutamate + CoA + H(+). The protein operates within amino-acid biosynthesis; L-arginine biosynthesis; L-ornithine and N-acetyl-L-glutamate from L-glutamate and N(2)-acetyl-L-ornithine (cyclic): step 1/1. It functions in the pathway amino-acid biosynthesis; L-arginine biosynthesis; N(2)-acetyl-L-ornithine from L-glutamate: step 1/4. Functionally, catalyzes two activities which are involved in the cyclic version of arginine biosynthesis: the synthesis of N-acetylglutamate from glutamate and acetyl-CoA as the acetyl donor, and of ornithine by transacetylation between N(2)-acetylornithine and glutamate. The polypeptide is Arginine biosynthesis bifunctional protein ArgJ (Bacillus licheniformis (strain ATCC 14580 / DSM 13 / JCM 2505 / CCUG 7422 / NBRC 12200 / NCIMB 9375 / NCTC 10341 / NRRL NRS-1264 / Gibson 46)).